The sequence spans 42 residues: MSAEDLFTIQILCDQIELKLASIVINSNIKLQLKRKKKTQQL.

It is found in the cytoplasm. The protein resides in the nucleus. Its function is as follows. Mating type proteins are sequence specific DNA-binding proteins that act as master switches in yeast differentiation by controlling gene expression in a cell type-specific fashion. Required for meiosis, but plays no role in conjugation. This Schizosaccharomyces pombe (strain 972 / ATCC 24843) (Fission yeast) protein is Mating-type M-specific polypeptide Mi (mat1-Mi).